Here is a 132-residue protein sequence, read N- to C-terminus: Large ribosomal subunit protein bL17 (132 aa).

This sequence belongs to the bacterial ribosomal protein bL17 family. As to quaternary structure, part of the 50S ribosomal subunit. Contacts protein L32.

The chain is Large ribosomal subunit protein bL17 from Anaplasma phagocytophilum (strain HZ).